The sequence spans 235 residues: Large ribosomal subunit protein uL1 (235 aa).

It belongs to the universal ribosomal protein uL1 family. In terms of assembly, part of the 50S ribosomal subunit.

In terms of biological role, binds directly to 23S rRNA. The L1 stalk is quite mobile in the ribosome, and is involved in E site tRNA release. Protein L1 is also a translational repressor protein, it controls the translation of the L11 operon by binding to its mRNA. In Methylobacterium sp. (strain 4-46), this protein is Large ribosomal subunit protein uL1.